The sequence spans 160 residues: uncharacterized protein (160 aa).

Residue Y49 is modified to Phosphotyrosine.

Functionally, may be involved in the assembly, structure, or function of the flagellum. May polymerize to form a filamentous structure that is part of the flagellum. This is an uncharacterized protein from Bacillus subtilis (strain 168).